The chain runs to 252 residues: Imidazole glycerol phosphate synthase subunit HisF (252 aa).

Catalysis depends on residues D11 and D130.

The protein belongs to the HisA/HisF family. As to quaternary structure, heterodimer of HisH and HisF.

Its subcellular location is the cytoplasm. It catalyses the reaction 5-[(5-phospho-1-deoxy-D-ribulos-1-ylimino)methylamino]-1-(5-phospho-beta-D-ribosyl)imidazole-4-carboxamide + L-glutamine = D-erythro-1-(imidazol-4-yl)glycerol 3-phosphate + 5-amino-1-(5-phospho-beta-D-ribosyl)imidazole-4-carboxamide + L-glutamate + H(+). It participates in amino-acid biosynthesis; L-histidine biosynthesis; L-histidine from 5-phospho-alpha-D-ribose 1-diphosphate: step 5/9. In terms of biological role, IGPS catalyzes the conversion of PRFAR and glutamine to IGP, AICAR and glutamate. The HisF subunit catalyzes the cyclization activity that produces IGP and AICAR from PRFAR using the ammonia provided by the HisH subunit. The protein is Imidazole glycerol phosphate synthase subunit HisF of Bacillus cereus (strain Q1).